The primary structure comprises 298 residues: Homoserine kinase (298 aa).

Residue 83 to 93 (PISRGLGSSSS) participates in ATP binding.

It belongs to the GHMP kinase family. Homoserine kinase subfamily.

It localises to the cytoplasm. The catalysed reaction is L-homoserine + ATP = O-phospho-L-homoserine + ADP + H(+). It participates in amino-acid biosynthesis; L-threonine biosynthesis; L-threonine from L-aspartate: step 4/5. In terms of biological role, catalyzes the ATP-dependent phosphorylation of L-homoserine to L-homoserine phosphate. The protein is Homoserine kinase of Clostridium botulinum (strain Eklund 17B / Type B).